A 301-amino-acid chain; its full sequence is Radial spoke head 1 homolog (301 aa).

Residues 1–20 (MSDLGSEELEEEGENDLGEY) are compositionally biased toward acidic residues. Residues 1 to 41 (MSDLGSEELEEEGENDLGEYEGERNEVGERHGHGKARLPNG) are disordered. 6 MORN repeats span residues 20–43 (YEGERNEVGERHGHGKARLPNGDT), 44–66 (YEGSYEFGKRHGQGTYKFKNGAR), 67–89 (YTGDYVKNKKHGQGTFIYPDGSR), 90–112 (YEGEWADDQRHGQGVYYYVNNDT), 113–135 (YTGEWFNHQRHGQGTYLYAETGS), and 159–181 (YQGKFMNKNPVGPGKYVFDIGCE). Basic and acidic residues predominate over residues 21–31 (EGERNEVGERH). Positions 225–301 (LSEEQPPPEG…FDEEPSDLQD (77 aa)) are disordered. The span at 249 to 261 (PSEDIQAEGFEGE) shows a compositional bias: acidic residues. Residues 262-278 (LEPRGADEDVDTFRQES) show a composition bias toward basic and acidic residues. Residues 279–290 (QENSYDIDQGNL) are compositionally biased toward polar residues. Residues 292–301 (FDEEPSDLQD) show a composition bias toward acidic residues.

As to quaternary structure, component of the axonemal radial spoke 1 (RS1) and 2 (RS2) complexes, at least composed of spoke head proteins RSPH1, RSPH3, RSPH9 and the cilia-specific component RSPH4A or sperm-specific component RSPH6A, spoke stalk proteins RSPH14, DNAJB13, DYDC1, ROPN1L and NME5, and the RS1 complex-specific anchor protein IQUB. Interacts with RSPH3B. Interacts with RSPH4A. Interacts with RSPH6A. As to expression, expressed in the trachea, ependymal cells, oviduct and ependymal cells (at protein level). Germ cell specific. Specifically expressed in testis, and to a lower extent in ovary. Not expressed in somatic tissues.

The protein resides in the cytoplasm. The protein localises to the chromosome. Its subcellular location is the cytoskeleton. It localises to the cilium axoneme. It is found in the flagellum axoneme. Functions as part of axonemal radial spoke complexes that play an important part in the motility of sperm and cilia. In Mus musculus (Mouse), this protein is Radial spoke head 1 homolog (Rsph1).